The primary structure comprises 175 residues: Large ribosomal subunit protein uL10 (175 aa).

It belongs to the universal ribosomal protein uL10 family. Part of the ribosomal stalk of the 50S ribosomal subunit. The N-terminus interacts with L11 and the large rRNA to form the base of the stalk. The C-terminus forms an elongated spine to which L12 dimers bind in a sequential fashion forming a multimeric L10(L12)X complex.

Functionally, forms part of the ribosomal stalk, playing a central role in the interaction of the ribosome with GTP-bound translation factors. The protein is Large ribosomal subunit protein uL10 of Methylobacterium sp. (strain 4-46).